Here is a 541-residue protein sequence, read N- to C-terminus: Tyrosine-protein phosphatase non-receptor type 5 (541 aa).

The tract at residues 1 to 55 (MCCSERLLGLPQPVEMEAPDEAEGLPSKQKEMPPPPPPSPPSEPAQKLPPQGAGS) is disordered. The segment covering 32 to 43 (MPPPPPPSPPSE) has biased composition (pro residues). A run of 2 helical transmembrane segments spans residues 64-84 (LCLFAASQFLLACGVLWLSGH) and 122-142 (LLLVSLTVSLVIVTTLVWHLL). Phosphoserine; by PKA is present on serine 221. Residue threonine 231 is modified to Phosphothreonine; by MAPK. The residue at position 244 (serine 244) is a Phosphoserine; by MAPK. The Tyrosine-protein phosphatase domain maps to 276–531 (LQAEFFEIPM…QFVHHAMSLY (256 aa)). Residues aspartate 437, 472-478 (CSAGIGR), and glutamine 516 contribute to the substrate site. The active-site Phosphocysteine intermediate is cysteine 472.

This sequence belongs to the protein-tyrosine phosphatase family. Non-receptor class subfamily. Post-translationally, phosphorylation at Ser-221 by PKA deactivates PTPN5. Phosphorylation at Thr-231 and Ser-244 by MAPKs stabilizes the phosphatase, dephosphorylation of these sites results in ubiquitin-mediated degradation of the active phosphatase. STEP20 is expressed only in the CNS.

Its subcellular location is the endoplasmic reticulum membrane. The protein localises to the cytoplasm. It catalyses the reaction O-phospho-L-tyrosyl-[protein] + H2O = L-tyrosyl-[protein] + phosphate. May regulate the activity of several effector molecules involved in synaptic plasticity and neuronal cell survival, including MAPKs, Src family kinases and NMDA receptors. The polypeptide is Tyrosine-protein phosphatase non-receptor type 5 (Ptpn5) (Mus musculus (Mouse)).